The following is a 412-amino-acid chain: L-cysteine:1D-myo-inositol 2-amino-2-deoxy-alpha-D-glucopyranoside ligase (412 aa).

Cys43 provides a ligand contact to Zn(2+). Residues 43–46, Thr58, and 81–83 contribute to the L-cysteinyl-5'-AMP site; these read CGIT and NVT. The 'HIGH' region signature appears at 45 to 55; that stretch reads ITPYDATHLGH. The 'ERGGDP' region motif lies at 186–191; sequence ERGGDP. An L-cysteinyl-5'-AMP-binding site is contributed by Trp227. Position 231 (Cys231) interacts with Zn(2+). An L-cysteinyl-5'-AMP-binding site is contributed by 249-251; that stretch reads GND. His256 serves as a coordination point for Zn(2+). Position 283 (Ile283) interacts with L-cysteinyl-5'-AMP. Residues 289–293 carry the 'KMSKS' region motif; the sequence is KMSKS.

It belongs to the class-I aminoacyl-tRNA synthetase family. MshC subfamily. Monomer. Zn(2+) is required as a cofactor.

The enzyme catalyses 1D-myo-inositol 2-amino-2-deoxy-alpha-D-glucopyranoside + L-cysteine + ATP = 1D-myo-inositol 2-(L-cysteinylamino)-2-deoxy-alpha-D-glucopyranoside + AMP + diphosphate + H(+). Catalyzes the ATP-dependent condensation of GlcN-Ins and L-cysteine to form L-Cys-GlcN-Ins. The chain is L-cysteine:1D-myo-inositol 2-amino-2-deoxy-alpha-D-glucopyranoside ligase from Salinispora arenicola (strain CNS-205).